The sequence spans 263 residues: MSIHPTAIIAPEAKLAPDVEVGPFSIVGPDVTLAAGVRLLSHVVVEGATTIGEGCVVHSFANLGGPPQHLGHKGERTELIIGPRNIIREHVTMHTGTASGKGVTTIGSDGLYMVGSHVAHDCTVGDFVVLAKGATLGGHVAIGDYVFMGGLAAAHQFSRIGRYSFIGGLAAVTKDVIPYGSVWGNHAHLEGLNLVGLKRRGFPRETINALRAAYRLMFADEGTFQERLDDVAEIHAGNAEVMEIVDFIRTDANRPLCLPEREV.

Belongs to the transferase hexapeptide repeat family. LpxA subfamily. Homotrimer.

The protein localises to the cytoplasm. The enzyme catalyses a (3R)-hydroxyacyl-[ACP] + UDP-N-acetyl-alpha-D-glucosamine = a UDP-3-O-[(3R)-3-hydroxyacyl]-N-acetyl-alpha-D-glucosamine + holo-[ACP]. It participates in glycolipid biosynthesis; lipid IV(A) biosynthesis; lipid IV(A) from (3R)-3-hydroxytetradecanoyl-[acyl-carrier-protein] and UDP-N-acetyl-alpha-D-glucosamine: step 1/6. Involved in the biosynthesis of lipid A, a phosphorylated glycolipid that anchors the lipopolysaccharide to the outer membrane of the cell. The polypeptide is Acyl-[acyl-carrier-protein]--UDP-N-acetylglucosamine O-acyltransferase (Caulobacter vibrioides (strain ATCC 19089 / CIP 103742 / CB 15) (Caulobacter crescentus)).